The primary structure comprises 186 residues: Ribosome-recycling factor (186 aa).

2 stretches are compositionally biased toward basic and acidic residues: residues 134 to 169 (RDAN…KKAE) and 176 to 186 (AKAREAEVMED). The disordered stretch occupies residues 134–186 (RDANKAAETAEKDKEMTEDDRDKTKDQVQELTKKAETNVNESAKAREAEVMED).

This sequence belongs to the RRF family.

It localises to the cytoplasm. Its function is as follows. Responsible for the release of ribosomes from messenger RNA at the termination of protein biosynthesis. May increase the efficiency of translation by recycling ribosomes from one round of translation to another. The chain is Ribosome-recycling factor from Rhodopirellula baltica (strain DSM 10527 / NCIMB 13988 / SH1).